The sequence spans 367 residues: Testis-specific serine/threonine-protein kinase 1 (367 aa).

The Protein kinase domain maps to 12 to 272; that stretch reads YLLGINLGEG…IDEILSHCWM (261 aa). Residues 18 to 26 and Lys41 contribute to the ATP site; that span reads LGEGSYAKV. The Proton acceptor role is filled by Asp136. A Phosphothreonine modification is found at Thr174. Residues 276-367 form a disordered region; that stretch reads ARGSPSVAIN…PQQPPETRAQ (92 aa). Over residues 303–314 the composition is skewed to basic and acidic residues; it reads GSDKKSATKLEP.

The protein belongs to the protein kinase superfamily. CAMK Ser/Thr protein kinase family. In terms of assembly, interacts with TSSK2. Interacts with HSP90; this interaction stabilizes TSSK1. Mg(2+) is required as a cofactor. Autophosphorylated. In terms of processing, ubiquitinated; HSP90 activity negatively regulates ubiquitination and degradation. As to expression, testis-specific. Present in sperm (at protein level).

Its subcellular location is the cytoplasm. It localises to the cytoplasmic vesicle. The protein resides in the secretory vesicle. It is found in the acrosome. The protein localises to the cell projection. Its subcellular location is the cilium. It localises to the flagellum. The enzyme catalyses L-seryl-[protein] + ATP = O-phospho-L-seryl-[protein] + ADP + H(+). The catalysed reaction is L-threonyl-[protein] + ATP = O-phospho-L-threonyl-[protein] + ADP + H(+). Kinase activity is specifically inhibited by 2 classes of compounds: biphenyl compounds (1,1'-(biphenyl-4,4'-diyl)bis(2,2-dihydroxyethanone)) and 1,2,7-trialky-1H-imidazo[4,5-g]quinoxalin-6-one. Activated by phosphorylation on Thr-174 and potentially by autophosphorylation. Testis-specific serine/threonine-protein kinase required during spermatid development. Phosphorylates 'Ser-288' of TSKS. Involved in the late stages of spermatogenesis, during the reconstruction of the cytoplasm. During spermatogenesis, required for the transformation of a ring-shaped structure around the base of the flagellum originating from the chromatoid body. This chain is Testis-specific serine/threonine-protein kinase 1 (TSSK1B), found in Homo sapiens (Human).